The following is a 153-amino-acid chain: Myosin regulatory light chain (153 aa).

Residue alanine 1 is modified to Blocked amino end (Ala). 2 EF-hand domains span residues 15 to 50 (KQIQ…LGRT) and 81 to 116 (DSEE…MGNN). Ca(2+) is bound by residues aspartate 28, aspartate 30, aspartate 32, and aspartate 39.

Its function is as follows. In molluscan muscle, calcium regulation is associated with myosin rather than with actin. Muscle myosin contains two types of light chains: the catalytic light chain, essential for ATPase activity, and the regulatory light chain, a calcium-binding protein responsible for Ca(2+) dependent binding and Ca(2+) dependent Mg-ATPase activity. The polypeptide is Myosin regulatory light chain (Patinopecten sp. (Scallop)).